The sequence spans 207 residues: MGSQWGKDKAYLKAKQSGYRSRAAMKLKEIIQKNPVIRPDDNILDLGAAPGSWLQVLREMTNGVIVGVDLNPILPIEGVRTIIGDFSDPVVIAQIRELMPEVNGIVCDASPKLSGQRSFDQARAIELNEMALGVARQLLKQGGNMIMKSFQGEDFSWLYNRVKQEFYSVRTYKAHTTRKGSTEMYIIAKNFIGTHQGLEESVSDGSA.

Residues Gly-51, Trp-53, Asp-69, Asp-85, and Asp-108 each coordinate S-adenosyl-L-methionine. Catalysis depends on Lys-148, which acts as the Proton acceptor.

Belongs to the class I-like SAM-binding methyltransferase superfamily. RNA methyltransferase RlmE family.

It is found in the cytoplasm. The catalysed reaction is uridine(2552) in 23S rRNA + S-adenosyl-L-methionine = 2'-O-methyluridine(2552) in 23S rRNA + S-adenosyl-L-homocysteine + H(+). Functionally, specifically methylates the uridine in position 2552 of 23S rRNA at the 2'-O position of the ribose in the fully assembled 50S ribosomal subunit. The protein is Ribosomal RNA large subunit methyltransferase E of Methanospirillum hungatei JF-1 (strain ATCC 27890 / DSM 864 / NBRC 100397 / JF-1).